A 266-amino-acid polypeptide reads, in one-letter code: Phosphatidylglycerol--prolipoprotein diacylglyceryl transferase (266 aa).

7 helical membrane-spanning segments follow: residues 10 to 30 (VALA…LIGI), 56 to 76 (LVFW…VLFY), 92 to 112 (WKGG…VWWF), 120 to 140 (FFQL…AGRI), 171 to 191 (PSQL…LWLF), 199 to 219 (ASVS…VEFV), and 233 to 253 (WLTM…ALMV). Position 139 (arginine 139) interacts with a 1,2-diacyl-sn-glycero-3-phospho-(1'-sn-glycerol).

The protein belongs to the Lgt family.

Its subcellular location is the cell inner membrane. The catalysed reaction is L-cysteinyl-[prolipoprotein] + a 1,2-diacyl-sn-glycero-3-phospho-(1'-sn-glycerol) = an S-1,2-diacyl-sn-glyceryl-L-cysteinyl-[prolipoprotein] + sn-glycerol 1-phosphate + H(+). The protein operates within protein modification; lipoprotein biosynthesis (diacylglyceryl transfer). Its function is as follows. Catalyzes the transfer of the diacylglyceryl group from phosphatidylglycerol to the sulfhydryl group of the N-terminal cysteine of a prolipoprotein, the first step in the formation of mature lipoproteins. The polypeptide is Phosphatidylglycerol--prolipoprotein diacylglyceryl transferase (Pseudomonas paraeruginosa (strain DSM 24068 / PA7) (Pseudomonas aeruginosa (strain PA7))).